We begin with the raw amino-acid sequence, 423 residues long: Methanol:N,N-dimethyl-4-nitrosoaniline oxidoreductase (423 aa).

The protein belongs to the iron-containing alcohol dehydrogenase family. In terms of assembly, homodecamer. Mg(2+) serves as cofactor. Zn(2+) is required as a cofactor. The cofactor is NADPH.

The enzyme catalyses methanol + A = formaldehyde + AH2. Catalyzes the oxidation of methanol to yield formaldehyde. While the in vivo electron acceptor is not known, N,N-dimethyl-4-nitrosoaniline (NDMA) can serve this function in vitro and is reduced to 4-(hydroxylamino)-N,N-dimethylaniline. This Rhodococcus erythropolis (Arthrobacter picolinophilus) protein is Methanol:N,N-dimethyl-4-nitrosoaniline oxidoreductase (thcE).